The following is a 197-amino-acid chain: MAKMMGPRFKMCRRLGLNVVGHPKAMKRADRGTSRADKKLSDYGIQLLEKQRLRAYYGVMERQFTRYVDQAFNSKEQPGEALLMILESRLDNMVYRMGFASSIRQARQMVNHGHFLVNGKKVNIPSFRLNIGDEVVLREKSRKTEMFVNNFKDSIGSEVPYISKEEDNFKGIFARKPKREEIPITIQEQLIVEFYSK.

The S4 RNA-binding domain occupies 88 to 150 (SRLDNMVYRM…SRKTEMFVNN (63 aa)).

This sequence belongs to the universal ribosomal protein uS4 family. Part of the 30S ribosomal subunit. Contacts protein S5. The interaction surface between S4 and S5 is involved in control of translational fidelity.

Functionally, one of the primary rRNA binding proteins, it binds directly to 16S rRNA where it nucleates assembly of the body of the 30S subunit. Its function is as follows. With S5 and S12 plays an important role in translational accuracy. The protein is Small ribosomal subunit protein uS4B of Clostridium perfringens (strain SM101 / Type A).